A 605-amino-acid chain; its full sequence is Pyruvate decarboxylase 1 (605 aa).

2 residues coordinate substrate: aspartate 67 and histidine 154. Positions 432–514 (DSWFNCQKLR…FLINNGGYTI (83 aa)) are thiamine pyrophosphate binding. Residues aspartate 482, asparagine 509, and glycine 511 each coordinate Mg(2+). Glutamate 515 provides a ligand contact to substrate.

Belongs to the TPP enzyme family. In terms of assembly, homotetramer. The cofactor is a metal cation. Thiamine diphosphate serves as cofactor.

It carries out the reaction a 2-oxocarboxylate + H(+) = an aldehyde + CO2. This chain is Pyruvate decarboxylase 1 (PDC1), found in Oryza sativa subsp. indica (Rice).